The chain runs to 178 residues: Thioredoxin F1, chloroplastic (178 aa).

The interval 1-22 (MPLSLRLSPSPTALSPTTGGFG) is disordered. The N-terminal 57 residues, 1 to 57 (MPLSLRLSPSPTALSPTTGGFGPSRKQCRIPYSGVPTTKIGFCSLDSRKRGDSSVVR), are a transit peptide targeting the chloroplast. Polar residues predominate over residues 7–18 (LSPSPTALSPTT). The Thioredoxin domain occupies 58-174 (CSLETVNVSV…LVAAIETARS (117 aa)). Active-site nucleophile residues include Cys99 and Cys102. The cysteines at positions 99 and 102 are disulfide-linked. Cys126 carries the S-glutathionyl cysteine; transient modification.

Belongs to the thioredoxin family. Plant F-type subfamily. Post-translationally, glutathionylation at Cys-126 decreases its ability to be reduced by ferredoxin-thioredoxin reductase and reduces its efficiency in activating target chloroplastic enzymes.

Its subcellular location is the plastid. It localises to the chloroplast stroma. In terms of biological role, thiol-disulfide oxidoreductase involved in the redox regulation of enzymes of both reductive pentose phosphate pathway (Calvin-Benson cycle) and oxidative pentose phosphate pathway. Under light or reducing conditions, activates in chloroplast the glyceraldehyde-3-phosphate dehydrogenase, the phosphoribulokinase and the fructose-1,6-bisphosphate phosphatase, and inhibits the glucose-6-phosphate dehydrogenase. This chain is Thioredoxin F1, chloroplastic, found in Arabidopsis thaliana (Mouse-ear cress).